Consider the following 309-residue polypeptide: NAD kinase (309 aa).

Residue aspartate 89 is the Proton acceptor of the active site. NAD(+)-binding positions include aspartate 89–glycine 90, asparagine 163–glutamate 164, histidine 174, arginine 191, aspartate 193, and threonine 204–serine 209.

The protein belongs to the NAD kinase family. Requires a divalent metal cation as cofactor.

It is found in the cytoplasm. The catalysed reaction is NAD(+) + ATP = ADP + NADP(+) + H(+). Involved in the regulation of the intracellular balance of NAD and NADP, and is a key enzyme in the biosynthesis of NADP. Catalyzes specifically the phosphorylation on 2'-hydroxyl of the adenosine moiety of NAD to yield NADP. The sequence is that of NAD kinase from Shewanella sp. (strain ANA-3).